The following is a 100-amino-acid chain: Urease subunit gamma (100 aa).

It belongs to the urease gamma subunit family. Heterotrimer of UreA (gamma), UreB (beta) and UreC (alpha) subunits. Three heterotrimers associate to form the active enzyme.

The protein resides in the cytoplasm. It catalyses the reaction urea + 2 H2O + H(+) = hydrogencarbonate + 2 NH4(+). Its pathway is nitrogen metabolism; urea degradation; CO(2) and NH(3) from urea (urease route): step 1/1. In Tolumonas auensis (strain DSM 9187 / NBRC 110442 / TA 4), this protein is Urease subunit gamma.